Consider the following 179-residue polypeptide: Macro domain-containing protein XAC3343 (179 aa).

The region spanning 1-175 (MRIEVWQGDI…AYQQALATQE (175 aa)) is the Macro domain.

The protein belongs to the MacroD-type family.

The sequence is that of Macro domain-containing protein XAC3343 from Xanthomonas axonopodis pv. citri (strain 306).